A 555-amino-acid polypeptide reads, in one-letter code: Potassium-transporting ATPase potassium-binding subunit (555 aa).

The next 10 helical transmembrane spans lie at 2 to 22, 60 to 80, 130 to 150, 173 to 193, 246 to 266, 278 to 298, 374 to 394, 412 to 432, 483 to 503, and 525 to 545; these read IWVA…PTGV, QYAL…YFIF, IGIT…VMAF, VFLP…VPQT, MSNI…PFTY, ILFV…TTSE, AGFV…GLMV, LIAV…ALAL, LVMF…AASL, and GIFI…MLVL.

It belongs to the KdpA family. The system is composed of three essential subunits: KdpA, KdpB and KdpC.

The protein resides in the cell membrane. Its function is as follows. Part of the high-affinity ATP-driven potassium transport (or Kdp) system, which catalyzes the hydrolysis of ATP coupled with the electrogenic transport of potassium into the cytoplasm. This subunit binds the extracellular potassium ions and delivers the ions to the membrane domain of KdpB through an intramembrane tunnel. The polypeptide is Potassium-transporting ATPase potassium-binding subunit (Bacillus cereus (strain B4264)).